The primary structure comprises 337 residues: MVREEVVGSTRALQWKCVESRADSKRLYYGRFILSPLLKGQADTIGIAMRRALLGEIEGTCITRAKSEKVPHEYSTIAGIEESVHEILMNLKEIVLRSNLYGTRDASICVRGPRCVTAQDIISPPSVEVVDTTQHIASLTEPIDLCIGLQIQRDRGYRMKTTKNSQDGSYPIDAVSMPVRNANHSIHSYGNGNQKQEILFLEIWTNGSLTPKEALHEASRNLIDLFIPFLHAEEEDINFEENQNRFTVPPFTFPDRLANLKKNKKEIALKCIFIDQSELPPRTYNCLKRSNIHTLLDLLSNSQEDLMKIEYFRIEDVKQILDTLRKHFAIDLPKNKF.

An alpha N-terminal domain (alpha-NTD) region spans residues 1 to 233 (MVREEVVGST…DLFIPFLHAE (233 aa)). The alpha C-terminal domain (alpha-CTD) stretch occupies residues 265–337 (KEIALKCIFI…FAIDLPKNKF (73 aa)).

This sequence belongs to the RNA polymerase alpha chain family. In plastids the minimal PEP RNA polymerase catalytic core is composed of four subunits: alpha, beta, beta', and beta''. When a (nuclear-encoded) sigma factor is associated with the core the holoenzyme is formed, which can initiate transcription.

Its subcellular location is the plastid. The protein resides in the chloroplast. The catalysed reaction is RNA(n) + a ribonucleoside 5'-triphosphate = RNA(n+1) + diphosphate. Its function is as follows. DNA-dependent RNA polymerase catalyzes the transcription of DNA into RNA using the four ribonucleoside triphosphates as substrates. This chain is DNA-directed RNA polymerase subunit alpha, found in Acorus gramineus (Dwarf sweet flag).